The primary structure comprises 221 residues: NAD(P)H-hydrate epimerase (221 aa).

Residues 9–219 (MRELETAAVK…NIGLPKELLS (211 aa)) enclose the YjeF N-terminal domain. 60 to 64 (GNGGD) serves as a coordination point for (6S)-NADPHX. K(+)-binding residues include Asn61 and Asp131. Residues 135–141 (GIGFKGE), Tyr146, and Asp164 each bind (6S)-NADPHX. Ser167 provides a ligand contact to K(+).

This sequence belongs to the NnrE/AIBP family. The cofactor is K(+).

It carries out the reaction (6R)-NADHX = (6S)-NADHX. It catalyses the reaction (6R)-NADPHX = (6S)-NADPHX. Functionally, catalyzes the epimerization of the S- and R-forms of NAD(P)HX, a damaged form of NAD(P)H that is a result of enzymatic or heat-dependent hydration. This is a prerequisite for the S-specific NAD(P)H-hydrate dehydratase to allow the repair of both epimers of NAD(P)HX. In Elusimicrobium minutum (strain Pei191), this protein is NAD(P)H-hydrate epimerase.